Here is a 99-residue protein sequence, read N- to C-terminus: Nucleoid-associated protein LACR_0106 (99 aa).

This sequence belongs to the YbaB/EbfC family. Homodimer.

The protein resides in the cytoplasm. It is found in the nucleoid. In terms of biological role, binds to DNA and alters its conformation. May be involved in regulation of gene expression, nucleoid organization and DNA protection. The chain is Nucleoid-associated protein LACR_0106 from Lactococcus lactis subsp. cremoris (strain SK11).